Consider the following 296-residue polypeptide: 4-hydroxybenzoate octaprenyltransferase (296 aa).

Helical transmembrane passes span 28–48, 52–72, 102–122, 146–166, 169–189, 219–239, 241–261, and 275–295; these read PIGI…AGKG, LANI…GCVI, ALVF…CTNA, YYPQ…AFTA, GELP…TVGY, VIIL…GSKF, LGMW…WEFW, and FLHN…DYAL.

This sequence belongs to the UbiA prenyltransferase family. Mg(2+) serves as cofactor.

It localises to the cell inner membrane. It catalyses the reaction all-trans-octaprenyl diphosphate + 4-hydroxybenzoate = 4-hydroxy-3-(all-trans-octaprenyl)benzoate + diphosphate. It participates in cofactor biosynthesis; ubiquinone biosynthesis. In terms of biological role, catalyzes the prenylation of para-hydroxybenzoate (PHB) with an all-trans polyprenyl group. Mediates the second step in the final reaction sequence of ubiquinone-8 (UQ-8) biosynthesis, which is the condensation of the polyisoprenoid side chain with PHB, generating the first membrane-bound Q intermediate 3-octaprenyl-4-hydroxybenzoate. The polypeptide is 4-hydroxybenzoate octaprenyltransferase (Pseudomonas fluorescens (strain Pf0-1)).